The following is a 457-amino-acid chain: Siroheme synthase (457 aa).

Positions 1–204 are precorrin-2 dehydrogenase /sirohydrochlorin ferrochelatase; sequence MDHLPIFCQL…ADEKAVNATT (204 aa). Residues 22-23 and 43-44 each bind NAD(+); these read DV and LT. S128 carries the phosphoserine modification. Positions 216-457 are uroporphyrinogen-III C-methyltransferase; the sequence is GEVVLVGAGP…RDKLNWFSNH (242 aa). P225 serves as a coordination point for S-adenosyl-L-methionine. D248 functions as the Proton acceptor in the catalytic mechanism. Residue K270 is the Proton donor of the active site. S-adenosyl-L-methionine-binding positions include 301–303, I306, 331–332, M382, and G411; these read GGD and TA.

It in the N-terminal section; belongs to the precorrin-2 dehydrogenase / sirohydrochlorin ferrochelatase family. The protein in the C-terminal section; belongs to the precorrin methyltransferase family.

It carries out the reaction uroporphyrinogen III + 2 S-adenosyl-L-methionine = precorrin-2 + 2 S-adenosyl-L-homocysteine + H(+). It catalyses the reaction precorrin-2 + NAD(+) = sirohydrochlorin + NADH + 2 H(+). The catalysed reaction is siroheme + 2 H(+) = sirohydrochlorin + Fe(2+). It participates in cofactor biosynthesis; adenosylcobalamin biosynthesis; precorrin-2 from uroporphyrinogen III: step 1/1. It functions in the pathway cofactor biosynthesis; adenosylcobalamin biosynthesis; sirohydrochlorin from precorrin-2: step 1/1. The protein operates within porphyrin-containing compound metabolism; siroheme biosynthesis; precorrin-2 from uroporphyrinogen III: step 1/1. Its pathway is porphyrin-containing compound metabolism; siroheme biosynthesis; siroheme from sirohydrochlorin: step 1/1. It participates in porphyrin-containing compound metabolism; siroheme biosynthesis; sirohydrochlorin from precorrin-2: step 1/1. Multifunctional enzyme that catalyzes the SAM-dependent methylations of uroporphyrinogen III at position C-2 and C-7 to form precorrin-2 via precorrin-1. Then it catalyzes the NAD-dependent ring dehydrogenation of precorrin-2 to yield sirohydrochlorin. Finally, it catalyzes the ferrochelation of sirohydrochlorin to yield siroheme. The polypeptide is Siroheme synthase (Salmonella typhi).